We begin with the raw amino-acid sequence, 561 residues long: Small ribosomal subunit protein bS1 (561 aa).

6 consecutive S1 motif domains span residues 22–88 (GEVI…LSRE), 106–172 (GDIL…VSRR), 193–261 (GSVI…LGMK), 278–348 (GTRL…LGMK), 365–435 (GDKI…LGIK), and 452–521 (GSLV…LSVK).

Belongs to the bacterial ribosomal protein bS1 family.

Its function is as follows. Binds mRNA; thus facilitating recognition of the initiation point. It is needed to translate mRNA with a short Shine-Dalgarno (SD) purine-rich sequence. The polypeptide is Small ribosomal subunit protein bS1 (rpsA) (Neisseria meningitidis serogroup B (strain ATCC BAA-335 / MC58)).